Consider the following 566-residue polypeptide: NAD-dependent malic enzyme (566 aa).

The active-site Proton donor is the Tyr104. NAD(+) is bound at residue Arg157. Lys175 functions as the Proton acceptor in the catalytic mechanism. A divalent metal cation is bound by residues Glu246, Asp247, and Asp270. Residues Asp270 and Asn419 each coordinate NAD(+).

Belongs to the malic enzymes family. Homotetramer. Mg(2+) serves as cofactor. Requires Mn(2+) as cofactor.

The catalysed reaction is (S)-malate + NAD(+) = pyruvate + CO2 + NADH. It catalyses the reaction oxaloacetate + H(+) = pyruvate + CO2. The protein is NAD-dependent malic enzyme of Cronobacter sakazakii (strain ATCC BAA-894) (Enterobacter sakazakii).